The primary structure comprises 538 residues: [Pyruvate dehydrogenase [acetyl-transferring]]-phosphatase 1, mitochondrial (538 aa).

The N-terminal 71 residues, 1 to 71 (MPAPTQLFFP…WWQYTQGRRY (71 aa)), are a transit peptide targeting the mitochondrion. One can recognise a PPM-type phosphatase domain in the interval 109–525 (ILGFDSNQLP…DDITIIVVQF (417 aa)). Mn(2+)-binding residues include aspartate 144 and glycine 145. Position 202 is an N6-acetyllysine (lysine 202). Aspartate 418 and aspartate 516 together coordinate Mn(2+).

Belongs to the PP2C family. In terms of assembly, heterodimer of a catalytic (PDP1) and a regulatory (PDPR) subunit. Mn(2+) is required as a cofactor. Requires Mg(2+) as cofactor.

The protein localises to the mitochondrion. It catalyses the reaction O-phospho-L-seryl-[pyruvate dehydrogenase E1 alpha subunit] + H2O = L-seryl-[pyruvate dehydrogenase E1 alpha subunit] + phosphate. Its activity is regulated as follows. Magnesium-dependent and calcium-stimulated. PDP1 activity strongly depends on its Ca(2+)-dependent binding to the lipoyl domain of E2 subunit of component of the pyruvate dehydrogenase complex. Functionally, mitochondrial enzyme that catalyzes the dephosphorylation and concomitant reactivation of the alpha subunit of the E1 component of the pyruvate dehydrogenase complex (PDC), thereby stimulating the conversion of pyruvate into acetyl-CoA. The polypeptide is [Pyruvate dehydrogenase [acetyl-transferring]]-phosphatase 1, mitochondrial (Pdp1) (Mus musculus (Mouse)).